We begin with the raw amino-acid sequence, 151 residues long: Transcriptional regulator MraZ (151 aa).

SpoVT-AbrB domains follow at residues 5 to 52 (IHQV…PLSE) and 81 to 124 (ATDL…SQEE).

The protein belongs to the MraZ family. Forms oligomers.

It localises to the cytoplasm. The protein resides in the nucleoid. This is Transcriptional regulator MraZ from Marinomonas sp. (strain MWYL1).